Consider the following 273-residue polypeptide: Homeobox protein Hox-C13b (273 aa).

A DNA-binding region (homeobox) is located at residues 201-260 (GRKKRVPYTKIQLKELEKEYAASKFITKDRRRRISATTSLSERQVTIWFQNRRVKEKKFV).

The protein belongs to the Abd-B homeobox family.

The protein localises to the nucleus. Functionally, sequence-specific transcription factor which is part of a developmental regulatory system that provides cells with specific positional identities on the anterior-posterior axis. Plays a role in early embryonic development. In Danio rerio (Zebrafish), this protein is Homeobox protein Hox-C13b (hoxc13b).